The chain runs to 74 residues: Metallothionein-like protein type 2 (74 aa).

This sequence belongs to the metallothionein superfamily. Type 15 family.

Functionally, metallothioneins have a high content of cysteine residues that bind various heavy metals. The polypeptide is Metallothionein-like protein type 2 (Nicotiana plumbaginifolia (Leadwort-leaved tobacco)).